The primary structure comprises 244 residues: LOB domain-containing protein 17 (244 aa).

The LOB domain occupies 6 to 108; the sequence is SPCGACKFLR…TQLEILKQQA (103 aa).

Belongs to the LOB domain-containing protein family. As to expression, expressed in roots, stems, leaves and flowers.

This Arabidopsis thaliana (Mouse-ear cress) protein is LOB domain-containing protein 17 (LBD17).